A 156-amino-acid polypeptide reads, in one-letter code: Small ribosomal subunit protein uS7 (156 aa).

Belongs to the universal ribosomal protein uS7 family. As to quaternary structure, part of the 30S ribosomal subunit. Contacts proteins S9 and S11.

Functionally, one of the primary rRNA binding proteins, it binds directly to 16S rRNA where it nucleates assembly of the head domain of the 30S subunit. Is located at the subunit interface close to the decoding center, probably blocks exit of the E-site tRNA. The sequence is that of Small ribosomal subunit protein uS7 from Pectobacterium carotovorum subsp. carotovorum (strain PC1).